Here is a 299-residue protein sequence, read N- to C-terminus: MAAAAGGADDESRSGRSSSDGECAVAPEPLTGPEGLFSFADFGSALGGGAGLPGRASGGAQSPLRYLHVLWQQDAEPRDELRCKIPAGRLRRAARPHRRLGPTGKEVHALKRLRDSANANDVETVQQLLEEGTDPCAADDKGRTALHFASCNGNDQIVQLLLDHGADPNQRDGLGNTPLHLAACTNHAPVITTLLRGGARVDALDRAGRTPLHLAKSKLNILQEGHSQCLEAVRLEVKQIIQMLREYLERLGRHEQRERLDDLCTRLQKTSTREQVDEVTDLLASFTSLSLQMQNMEKR.

The tract at residues 1 to 32 (MAAAAGGADDESRSGRSSSDGECAVAPEPLTG) is disordered. Ala2 carries the post-translational modification N-acetylalanine. Phosphoserine occurs at positions 57 and 62. The Nuclear localization signal (NLS) signature appears at 98–116 (RRLGPTGKEVHALKRLRDS). ANK repeat units lie at residues 108-137 (HALK…DPCA), 141-170 (KGRT…DPNQ), 174-203 (LGNT…RVDA), and 207-239 (AGRT…EVKQ). An LYN-binding region spans residues 140–240 (DKGRTALHFA…EAVRLEVKQI (101 aa)). A Nuclear export signal (NES) motif is present at residues 282 to 292 (LLASFTSLSLQ).

In terms of assembly, interacts (via ankyrin repeat region) with LYN (via SH3-domain) in an activation-independent status of LYN. Forms a multiprotein complex with LYN and HCLS1. Interacts with TSN2, VAV1, DBNL and LASP1.

The protein resides in the nucleus. Its subcellular location is the cytoplasm. It is found in the midbody. Its function is as follows. Plays an important role in regulating intracellular signaling events associated with erythroid terminal differentiation. The chain is Ankyrin repeat domain-containing protein 54 (ANKRD54) from Bos taurus (Bovine).